The sequence spans 310 residues: Methionyl-tRNA formyltransferase (310 aa).

111-114 (SILP) contacts (6S)-5,6,7,8-tetrahydrofolate.

It belongs to the Fmt family.

It carries out the reaction L-methionyl-tRNA(fMet) + (6R)-10-formyltetrahydrofolate = N-formyl-L-methionyl-tRNA(fMet) + (6S)-5,6,7,8-tetrahydrofolate + H(+). Attaches a formyl group to the free amino group of methionyl-tRNA(fMet). The formyl group appears to play a dual role in the initiator identity of N-formylmethionyl-tRNA by promoting its recognition by IF2 and preventing the misappropriation of this tRNA by the elongation apparatus. This is Methionyl-tRNA formyltransferase from Methylobacterium nodulans (strain LMG 21967 / CNCM I-2342 / ORS 2060).